The sequence spans 363 residues: Protein EXORDIUM-like 5 (363 aa).

An N-terminal signal peptide occupies residues 1–25 (MSSPATTITFFFFFTLSSFFYITSS). N-linked (GlcNAc...) asparagine glycosylation occurs at Asn144.

This sequence belongs to the EXORDIUM family.

It localises to the secreted. It is found in the extracellular space. Its subcellular location is the apoplast. May play a role in a brassinosteroid-dependent regulation of growth and development. This Arabidopsis thaliana (Mouse-ear cress) protein is Protein EXORDIUM-like 5 (EXL5).